Reading from the N-terminus, the 221-residue chain is Endonuclease V (221 aa).

Mg(2+) is bound by residues Asp38 and Asp104.

Belongs to the endonuclease V family. The cofactor is Mg(2+).

Its subcellular location is the cytoplasm. It carries out the reaction Endonucleolytic cleavage at apurinic or apyrimidinic sites to products with a 5'-phosphate.. In terms of biological role, DNA repair enzyme involved in the repair of deaminated bases. Selectively cleaves double-stranded DNA at the second phosphodiester bond 3' to a deoxyinosine leaving behind the intact lesion on the nicked DNA. Recognizes only deoxyinosine. The protein is Endonuclease V of Archaeoglobus fulgidus (strain ATCC 49558 / DSM 4304 / JCM 9628 / NBRC 100126 / VC-16).